The primary structure comprises 185 residues: ATP synthase subunit b 2 (185 aa).

A disordered region spans residues 1-23 (MAEGHGDAKGATAHTAADGGHKA). A compositionally biased stretch (low complexity) spans 9-18 (KGATAHTAAD). A helical membrane pass occupies residues 32–51 (TFASQLVSLTIAFVALYLIV).

It belongs to the ATPase B chain family. As to quaternary structure, F-type ATPases have 2 components, F(1) - the catalytic core - and F(0) - the membrane proton channel. F(1) has five subunits: alpha(3), beta(3), gamma(1), delta(1), epsilon(1). F(0) has three main subunits: a(1), b(2) and c(10-14). The alpha and beta chains form an alternating ring which encloses part of the gamma chain. F(1) is attached to F(0) by a central stalk formed by the gamma and epsilon chains, while a peripheral stalk is formed by the delta and b chains.

The protein localises to the cell inner membrane. F(1)F(0) ATP synthase produces ATP from ADP in the presence of a proton or sodium gradient. F-type ATPases consist of two structural domains, F(1) containing the extramembraneous catalytic core and F(0) containing the membrane proton channel, linked together by a central stalk and a peripheral stalk. During catalysis, ATP synthesis in the catalytic domain of F(1) is coupled via a rotary mechanism of the central stalk subunits to proton translocation. In terms of biological role, component of the F(0) channel, it forms part of the peripheral stalk, linking F(1) to F(0). The b'-subunit is a diverged and duplicated form of b found in plants and photosynthetic bacteria. This chain is ATP synthase subunit b 2 (atpF2), found in Rhodopseudomonas palustris (strain HaA2).